The primary structure comprises 888 residues: Bifunctional uridylyltransferase/uridylyl-removing enzyme (888 aa).

Residues 1–348 (MATTTDKQVS…YHFAEDKIEP (348 aa)) form a uridylyltransferase region. Residues 349–709 (INPRFRIINN…LQPTTSRGAT (361 aa)) form a uridylyl-removing region. Residues 468–590 (VDEHTILVIR…VGTQQRLDYL (123 aa)) form the HD domain. 2 consecutive ACT domains span residues 710-787 (ELII…DDTM) and 817-888 (ELSI…NIEQ).

It belongs to the GlnD family. Requires Mg(2+) as cofactor.

The enzyme catalyses [protein-PII]-L-tyrosine + UTP = [protein-PII]-uridylyl-L-tyrosine + diphosphate. It carries out the reaction [protein-PII]-uridylyl-L-tyrosine + H2O = [protein-PII]-L-tyrosine + UMP + H(+). Uridylyltransferase (UTase) activity is inhibited by glutamine, while glutamine activates uridylyl-removing (UR) activity. Modifies, by uridylylation and deuridylylation, the PII regulatory proteins (GlnB and homologs), in response to the nitrogen status of the cell that GlnD senses through the glutamine level. Under low glutamine levels, catalyzes the conversion of the PII proteins and UTP to PII-UMP and PPi, while under higher glutamine levels, GlnD hydrolyzes PII-UMP to PII and UMP (deuridylylation). Thus, controls uridylylation state and activity of the PII proteins, and plays an important role in the regulation of nitrogen assimilation and metabolism. This is Bifunctional uridylyltransferase/uridylyl-removing enzyme from Hydrogenovibrio crunogenus (strain DSM 25203 / XCL-2) (Thiomicrospira crunogena).